The sequence spans 258 residues: Lipoprotein-releasing system ATP-binding protein LolD (258 aa).

Residues 5–244 form the ABC transporter domain; that stretch reads LQCCQLSKSY…PTSSITDPAN (240 aa). 41 to 48 contributes to the ATP binding site; sequence GSSGCGKS. The segment at 222-258 is disordered; it reads LRPLSDNSEQALPPTSSITDPANNIKDNEPQANERHV. Over residues 226-243 the composition is skewed to polar residues; the sequence is SDNSEQALPPTSSITDPA. Residues 247–258 are compositionally biased toward basic and acidic residues; that stretch reads KDNEPQANERHV.

This sequence belongs to the ABC transporter superfamily. Lipoprotein translocase (TC 3.A.1.125) family. As to quaternary structure, the complex is composed of two ATP-binding proteins (LolD) and two transmembrane proteins (LolC and LolE).

It is found in the cell inner membrane. Its function is as follows. Part of the ABC transporter complex LolCDE involved in the translocation of mature outer membrane-directed lipoproteins, from the inner membrane to the periplasmic chaperone, LolA. Responsible for the formation of the LolA-lipoprotein complex in an ATP-dependent manner. The polypeptide is Lipoprotein-releasing system ATP-binding protein LolD (Colwellia psychrerythraea (strain 34H / ATCC BAA-681) (Vibrio psychroerythus)).